The chain runs to 276 residues: Shikimate dehydrogenase (NADP(+)) (276 aa).

Shikimate is bound by residues 14-16 and Thr-61; that span reads SKS. Lys-65 serves as the catalytic Proton acceptor. Asp-77 provides a ligand contact to NADP(+). 2 residues coordinate shikimate: Asn-86 and Asp-102. Residues 127 to 131, 151 to 156, and Met-214 each bind NADP(+); these read GAGGA and NRTPDK. Position 216 (Tyr-216) interacts with shikimate. Residue Gly-238 coordinates NADP(+).

This sequence belongs to the shikimate dehydrogenase family. As to quaternary structure, homodimer.

It carries out the reaction shikimate + NADP(+) = 3-dehydroshikimate + NADPH + H(+). It participates in metabolic intermediate biosynthesis; chorismate biosynthesis; chorismate from D-erythrose 4-phosphate and phosphoenolpyruvate: step 4/7. Involved in the biosynthesis of the chorismate, which leads to the biosynthesis of aromatic amino acids. Catalyzes the reversible NADPH linked reduction of 3-dehydroshikimate (DHSA) to yield shikimate (SA). This is Shikimate dehydrogenase (NADP(+)) from Nitrosomonas europaea (strain ATCC 19718 / CIP 103999 / KCTC 2705 / NBRC 14298).